The primary structure comprises 409 residues: Protein naked cuticle homolog 2 (409 aa).

Gly2 carries N-myristoyl glycine lipidation. The EF-hand domain occupies 109 to 144 (AEDNRQEWVFTLYDFDNSGKVTKEDMSSLMHTIYDV). Ca(2+)-binding residues include Asp122, Asp124, Ser126, Lys128, and Asp133. 4 disordered regions span residues 160-224 (LRVK…YCVD), 243-315 (TSRF…RYPG), 346-366 (SHTH…RIRS), and 388-409 (RHEH…YHQT). 2 stretches are compositionally biased toward basic and acidic residues: residues 171–185 (AARR…RETS) and 193–224 (VRSE…YCVD). Positions 247–268 (DSSSPDADQDPPSRSSHSQSRP) are enriched in low complexity. The span at 389–409 (HEHHHHHEHHHHHHYHHYHQT) shows a compositional bias: basic residues.

It belongs to the NKD family. Expressed ubiquitously until 1 dpf, when expression becomes confined to the anterior CNS, with slight expression in the developing tail.

The protein resides in the cell membrane. It is found in the cytoplasm. Cell autonomous antagonist of both the canonical and non-canonical Wnt signaling pathways. This chain is Protein naked cuticle homolog 2 (nkd2), found in Danio rerio (Zebrafish).